The following is an 89-amino-acid chain: Small ribosomal subunit protein uS15 (89 aa).

The segment covering 1–20 (MSITQERKSALIAEHARGKT) has biased composition (basic and acidic residues). A disordered region spans residues 1–24 (MSITQERKSALIAEHARGKTDTGS).

This sequence belongs to the universal ribosomal protein uS15 family. Part of the 30S ribosomal subunit. Forms a bridge to the 50S subunit in the 70S ribosome, contacting the 23S rRNA.

Its function is as follows. One of the primary rRNA binding proteins, it binds directly to 16S rRNA where it helps nucleate assembly of the platform of the 30S subunit by binding and bridging several RNA helices of the 16S rRNA. Forms an intersubunit bridge (bridge B4) with the 23S rRNA of the 50S subunit in the ribosome. The chain is Small ribosomal subunit protein uS15 from Maricaulis maris (strain MCS10) (Caulobacter maris).